Reading from the N-terminus, the 481-residue chain is 6-phosphogluconate dehydrogenase, decarboxylating (481 aa).

Residues 11–16, 34–36, 76–78, and N104 contribute to the NADP(+) site; these read GLAVMG, NRT, and VKA. Substrate contacts are provided by residues N104 and 130–132; that span reads SGG. Catalysis depends on K184, which acts as the Proton acceptor. 187 to 188 contacts substrate; the sequence is HN. Catalysis depends on E191, which acts as the Proton donor. Residues Y192, K259, R286, R445, and H451 each contribute to the substrate site.

Belongs to the 6-phosphogluconate dehydrogenase family. As to quaternary structure, homodimer.

The catalysed reaction is 6-phospho-D-gluconate + NADP(+) = D-ribulose 5-phosphate + CO2 + NADPH. Its pathway is carbohydrate degradation; pentose phosphate pathway; D-ribulose 5-phosphate from D-glucose 6-phosphate (oxidative stage): step 3/3. Its function is as follows. Catalyzes the oxidative decarboxylation of 6-phosphogluconate to ribulose 5-phosphate and CO(2), with concomitant reduction of NADP to NADPH. This chain is 6-phosphogluconate dehydrogenase, decarboxylating (Pgd), found in Drosophila melanogaster (Fruit fly).